A 156-amino-acid chain; its full sequence is Endoribonuclease YbeY (156 aa).

The Zn(2+) site is built by His122, His126, and His132.

Belongs to the endoribonuclease YbeY family. Zn(2+) is required as a cofactor.

It localises to the cytoplasm. Single strand-specific metallo-endoribonuclease involved in late-stage 70S ribosome quality control and in maturation of the 3' terminus of the 16S rRNA. This chain is Endoribonuclease YbeY, found in Bacillus cereus (strain ATCC 14579 / DSM 31 / CCUG 7414 / JCM 2152 / NBRC 15305 / NCIMB 9373 / NCTC 2599 / NRRL B-3711).